Reading from the N-terminus, the 143-residue chain is Transcriptional regulator MraZ (143 aa).

SpoVT-AbrB domains lie at Glu5 to Glu47 and Ala76 to Asn119.

The protein belongs to the MraZ family. Forms oligomers.

The protein localises to the cytoplasm. Its subcellular location is the nucleoid. The sequence is that of Transcriptional regulator MraZ from Caldicellulosiruptor bescii (strain ATCC BAA-1888 / DSM 6725 / KCTC 15123 / Z-1320) (Anaerocellum thermophilum).